A 764-amino-acid polypeptide reads, in one-letter code: MASSTIVLLLFLSFPFISFAASQAAKTFIFRIDGGSMPSIFPTHYHWYSTEFAEESRIVHVYHTVFHGFSAVVTPDEADNLRNHPAVLAVFEDRRRELHTTRSPQFLGLQNQKGLWSESDYGSDVIIGVFDTGIWPERRSFSDLNLGPIPKRWRGVCESGARFSPRNCNRKIIGARFFAKGQQAAVIGGINKTVEFLSPRDADGHGTHTSSTAAGRHAFKASMSGYASGVAKGVAPKARIAAYKVCWKDSGCLDSDILAAFDAAVRDGVDVISISIGGGDGITSPYYLDPIAIGSYGAASKGIFVSSSAGNEGPNGMSVTNLAPWVTTVGASTIDRNFPADAILGDGHRLRGVSLYAGVPLNGRMFPVVYPGKSGMSSASLCMENTLDPKQVRGKIVICDRGSSPRVAKGLVVKKAGGVGMILANGASNGEGLVGDAHLIPACAVGSNEGDRIKAYASSHPNPIASIDFRGTIVGIKPAPVIASFSGRGPNGLSPEILKPDLIAPGVNILAAWTDAVGPTGLPSDPRKTEFNILSGTSMACPHVSGAAALLKSAHPDWSPAVIRSAMMTTTNLVDNSNRSLIDESTGKSATPYDYGSGHLNLGRAMNPGLVYDITNDDYITFLCSIGYGPKTIQVITRTPVRCPTTRKPSPGNLNYPSITAVFPTNRRGLVSKTVIRTATNVGQAEAVYRARIESPRGVTVTVKPPRLVFTSAVKRRSYAVTVTVNTRNVVLGETGAVFGSVTWFDGGKHVVRSPIVVTQMDTL.

A signal peptide spans 1 to 20 (MASSTIVLLLFLSFPFISFA). The region spanning 46–99 (HWYSTEFAEESRIVHVYHTVFHGFSAVVTPDEADNLRNHPAVLAVFEDRRRELH) is the Inhibitor I9 domain. The 504-residue stretch at 103–606 (SPQFLGLQNQ…SGHLNLGRAM (504 aa)) folds into the Peptidase S8 domain. Asp-131 (charge relay system) is an active-site residue. Asn-191 carries an N-linked (GlcNAc...) asparagine glycan. His-205 acts as the Charge relay system in catalysis. The PA domain occupies 377–457 (SSASLCMENT…NEGDRIKAYA (81 aa)). Ser-538 acts as the Charge relay system in catalysis. Asn-578 carries N-linked (GlcNAc...) asparagine glycosylation.

This sequence belongs to the peptidase S8 family. In terms of tissue distribution, expressed in roots, leaves and flowers of mature plants.

The sequence is that of Subtilisin-like protease SBT1.6 from Arabidopsis thaliana (Mouse-ear cress).